The primary structure comprises 153 residues: MAATPAAIEVSLTIVFVLFFSADVSLTRNSEMKAHTSKMDSYSSSIYMNVLPTSLAQTSYHLAPISHLKCLSVQCSSHIHYSYYYGASVLERCVFHRSRIRGARFIVPIPFYCISKAQECFLTVYILPKNPFRVPSEMQLQLLAKKKLKPNLL.

Transmembrane regions (helical) follow at residues 1–21 (MAAT…LFFS) and 106–126 (IVPI…TVYI).

It localises to the membrane. This is an uncharacterized protein from Saccharomyces cerevisiae (strain ATCC 204508 / S288c) (Baker's yeast).